A 188-amino-acid polypeptide reads, in one-letter code: Peptidyl-tRNA hydrolase (188 aa).

TRNA is bound at residue Tyr-16. The active-site Proton acceptor is the His-21. The tRNA site is built by Phe-66, Asn-68, and Asn-114.

The protein belongs to the PTH family. As to quaternary structure, monomer.

The protein localises to the cytoplasm. The enzyme catalyses an N-acyl-L-alpha-aminoacyl-tRNA + H2O = an N-acyl-L-amino acid + a tRNA + H(+). Hydrolyzes ribosome-free peptidyl-tRNAs (with 1 or more amino acids incorporated), which drop off the ribosome during protein synthesis, or as a result of ribosome stalling. Functionally, catalyzes the release of premature peptidyl moieties from peptidyl-tRNA molecules trapped in stalled 50S ribosomal subunits, and thus maintains levels of free tRNAs and 50S ribosomes. The chain is Peptidyl-tRNA hydrolase from Citrifermentans bemidjiense (strain ATCC BAA-1014 / DSM 16622 / JCM 12645 / Bem) (Geobacter bemidjiensis).